Here is a 248-residue protein sequence, read N- to C-terminus: Meiotic drive suppressor wtf1 (248 aa).

A disordered region spans residues 30 to 68; the sequence is LLPEYNSDEESTLPPYSDHARVSNPPNTHRENHSSGTTD. A run of 4 helical transmembrane segments spans residues 73–93, 110–130, 152–172, and 186–206; these read FLIK…PAVC, WTLI…SWYF, IPMA…PRVT, and SLAD…VETV.

The protein belongs to the WTF family. Homomer. Interacts with other proteins that exhibit high sequence similarity.

The protein localises to the spore membrane. It localises to the vacuole membrane. Acts as a suppressor component of the dual wtf meiotic drive system, and can suppress but not confer meiotic drive by compatible poisons. Wtf meiotic drive systems promote unequal transmission of alleles from the parental zygote to progeny spores by encoding a poison and an antidote from the same locus; the poison is trans-acting and forms toxic aggregates in all spores within an ascus, wherease the antidote is spore-specific and targets aggregates for degradation by the vacuole. Meiotic drive by wtf systems therefore lead to poisoning of all progeny that do not inherit the dual poison/antidote allele, or express a compatible antidote. This is Meiotic drive suppressor wtf1 from Schizosaccharomyces pombe (Fission yeast).